The chain runs to 265 residues: Tryptophan synthase alpha chain (265 aa).

Catalysis depends on proton acceptor residues Glu-48 and Asp-59.

The protein belongs to the TrpA family. In terms of assembly, tetramer of two alpha and two beta chains.

It carries out the reaction (1S,2R)-1-C-(indol-3-yl)glycerol 3-phosphate + L-serine = D-glyceraldehyde 3-phosphate + L-tryptophan + H2O. The protein operates within amino-acid biosynthesis; L-tryptophan biosynthesis; L-tryptophan from chorismate: step 5/5. In terms of biological role, the alpha subunit is responsible for the aldol cleavage of indoleglycerol phosphate to indole and glyceraldehyde 3-phosphate. This chain is Tryptophan synthase alpha chain, found in Pelagibacter ubique (strain HTCC1062).